The primary structure comprises 344 residues: Thiamine thiazole synthase (344 aa).

Substrate contacts are provided by residues C90, 111–112 (EA), G119, and V184. C232 is modified (2,3-didehydroalanine (Cys)). Residues D234, H249, M301, and 311–313 (RMG) contribute to the substrate site.

The protein belongs to the THI4 family. As to quaternary structure, homooctamer. Interacts with cyp-41. The cofactor is Fe cation. In terms of processing, during the catalytic reaction, a sulfide is transferred from Cys-232 to a reaction intermediate, generating a dehydroalanine residue.

It localises to the cytoplasm. The protein resides in the nucleus. It catalyses the reaction [ADP-thiazole synthase]-L-cysteine + glycine + NAD(+) = [ADP-thiazole synthase]-dehydroalanine + ADP-5-ethyl-4-methylthiazole-2-carboxylate + nicotinamide + 3 H2O + 2 H(+). Its function is as follows. Involved in biosynthesis of the thiamine precursor thiazole. Catalyzes the conversion of NAD and glycine to adenosine diphosphate 5-(2-hydroxyethyl)-4-methylthiazole-2-carboxylic acid (ADT), an adenylated thiazole intermediate. The reaction includes an iron-dependent sulfide transfer from a conserved cysteine residue of the protein to a thiazole intermediate. The enzyme can only undergo a single turnover, which suggests it is a suicide enzyme. May have additional roles in adaptation to various stress conditions and in DNA damage tolerance. This is Thiamine thiazole synthase from Neurospora crassa (strain ATCC 24698 / 74-OR23-1A / CBS 708.71 / DSM 1257 / FGSC 987).